A 619-amino-acid chain; its full sequence is Pentatricopeptide repeat-containing protein At1g68980, mitochondrial (619 aa).

A mitochondrion-targeting transit peptide spans 1–100 (MLRKTLTLIS…RAFVSTTYVI (100 aa)). PPR repeat units lie at residues 186-221 (DLVA…GVKP), 222-256 (DELS…GFAS), 257-292 (RRIL…GEAS), 295-329 (SEET…ESMS), 366-400 (GIGV…GLQL), 401-435 (DVET…RVAD), 436-466 (LKRC…VMED), 472-506 (KSHD…QYEP), 507-541 (NNQT…KAKL), and 542-576 (EHAL…KIFV).

It belongs to the PPR family. P subfamily.

It localises to the mitochondrion. The protein is Pentatricopeptide repeat-containing protein At1g68980, mitochondrial of Arabidopsis thaliana (Mouse-ear cress).